The following is a 319-amino-acid chain: 7-methylguanosine phosphate-specific 5'-nucleotidase (319 aa).

Residue Asp-55 is the Nucleophile of the active site. Mg(2+) contacts are provided by Asp-55 and Asp-57. The Proton donor role is filled by Asp-57. Residue Glu-103 coordinates CMP. N(7)-methyl-GMP-binding residues include Glu-103 and Ser-124. Position 171-172 (Ser-171–Ala-172) interacts with substrate. Asp-245 contributes to the Mg(2+) binding site.

This sequence belongs to the pyrimidine 5'-nucleotidase family. In terms of assembly, monomer. Mg(2+) serves as cofactor.

It catalyses the reaction N(7)-methyl-GMP + H2O = N(7)-methylguanosine + phosphate. The catalysed reaction is CMP + H2O = cytidine + phosphate. It carries out the reaction a ribonucleoside 5'-phosphate + H2O = a ribonucleoside + phosphate. With respect to regulation, inhibited by high levels of AMP. Its function is as follows. Specifically hydrolyzes 7-methylguanosine monophosphate (m(7)GMP) to 7-methylguanosine and inorganic phosphate. Also able to mediate hydrolysis of diphosphate (m(7)GDP) to 7-methylguanosine and 2 inorganic phosphate with lower activity. The specific activity for m(7)GMP may protect cells against undesired salvage of m(7)GMP and its incorporation into nucleic acids. Also has weak activity for CMP. UMP and purine nucleotides are poor substrates. The chain is 7-methylguanosine phosphate-specific 5'-nucleotidase from Drosophila melanogaster (Fruit fly).